A 299-amino-acid polypeptide reads, in one-letter code: ATP phosphoribosyltransferase (299 aa).

This sequence belongs to the ATP phosphoribosyltransferase family. Long subfamily. Equilibrium between an active dimeric form, an inactive hexameric form and higher aggregates. Interconversion between the various forms is largely reversible and is influenced by the natural substrates and inhibitors of the enzyme. The cofactor is Mg(2+).

Its subcellular location is the cytoplasm. It carries out the reaction 1-(5-phospho-beta-D-ribosyl)-ATP + diphosphate = 5-phospho-alpha-D-ribose 1-diphosphate + ATP. Its pathway is amino-acid biosynthesis; L-histidine biosynthesis; L-histidine from 5-phospho-alpha-D-ribose 1-diphosphate: step 1/9. Its activity is regulated as follows. Feedback inhibited by histidine. In terms of biological role, catalyzes the condensation of ATP and 5-phosphoribose 1-diphosphate to form N'-(5'-phosphoribosyl)-ATP (PR-ATP). Has a crucial role in the pathway because the rate of histidine biosynthesis seems to be controlled primarily by regulation of HisG enzymatic activity. The sequence is that of ATP phosphoribosyltransferase from Escherichia coli O7:K1 (strain IAI39 / ExPEC).